The primary structure comprises 590 residues: Transcription factor GTE7 (590 aa).

Residues 125-160 form a disordered region; it reads LNNFTGEKNDLGPKKKKQKKNVSGLKRSNQFGPSDP. The Bromo domain maps to 164-270; it reads KLLAGMLNTC…DHFDGMFNPA (107 aa). Disordered stretches follow at residues 282-400 and 476-590; these read TGSS…KDPN and RQGF…EAQC. Over residues 288 to 298 the composition is skewed to basic and acidic residues; sequence PEPDFKPDFKQ. Residues 347-369 are compositionally biased toward pro residues; sequence PSPPPPPPVIQPELPQPQPPPPQ. The region spanning 394 to 475 is the NET domain; sequence PKAKDPNKRL…NYKKMASKIK (82 aa). Positions 498–508 are enriched in basic and acidic residues; the sequence is SAEKRTRRGDA. The span at 509–521 shows a compositional bias: acidic residues; that stretch reads GEEDVDIGEDIPI. Positions 537 to 562 are enriched in low complexity; sequence AAAASSGSSSSGSSSSSGGSSSSSDS.

The protein localises to the nucleus. The protein is Transcription factor GTE7 (GTE7) of Arabidopsis thaliana (Mouse-ear cress).